A 618-amino-acid polypeptide reads, in one-letter code: Dihydroxy-acid dehydratase (618 aa).

Asp81 contacts Mg(2+). Cys122 contacts [2Fe-2S] cluster. Mg(2+) is bound by residues Asp123 and Lys124. Lys124 bears the N6-carboxylysine mark. Cys195 contacts [2Fe-2S] cluster. Position 491 (Glu491) interacts with Mg(2+). Ser517 (proton acceptor) is an active-site residue.

This sequence belongs to the IlvD/Edd family. In terms of assembly, homodimer. [2Fe-2S] cluster is required as a cofactor. Mg(2+) serves as cofactor.

It carries out the reaction (2R)-2,3-dihydroxy-3-methylbutanoate = 3-methyl-2-oxobutanoate + H2O. The catalysed reaction is (2R,3R)-2,3-dihydroxy-3-methylpentanoate = (S)-3-methyl-2-oxopentanoate + H2O. It functions in the pathway amino-acid biosynthesis; L-isoleucine biosynthesis; L-isoleucine from 2-oxobutanoate: step 3/4. Its pathway is amino-acid biosynthesis; L-valine biosynthesis; L-valine from pyruvate: step 3/4. Functions in the biosynthesis of branched-chain amino acids. Catalyzes the dehydration of (2R,3R)-2,3-dihydroxy-3-methylpentanoate (2,3-dihydroxy-3-methylvalerate) into 2-oxo-3-methylpentanoate (2-oxo-3-methylvalerate) and of (2R)-2,3-dihydroxy-3-methylbutanoate (2,3-dihydroxyisovalerate) into 2-oxo-3-methylbutanoate (2-oxoisovalerate), the penultimate precursor to L-isoleucine and L-valine, respectively. In Rhodopseudomonas palustris (strain ATCC BAA-98 / CGA009), this protein is Dihydroxy-acid dehydratase.